The following is a 401-amino-acid chain: Tyrosine--tRNA ligase (401 aa).

Residues 42-51 carry the 'HIGH' region motif; that stretch reads PTAPDLHLGH. Residues 226 to 230 carry the 'KMSKS' region motif; that stretch reads KMSKS. K229 serves as a coordination point for ATP. The region spanning 336 to 397 is the S4 RNA-binding domain; the sequence is IALAQLLKQI…GKRRIAKLSI (62 aa).

This sequence belongs to the class-I aminoacyl-tRNA synthetase family. TyrS type 2 subfamily. Homodimer.

The protein localises to the cytoplasm. The enzyme catalyses tRNA(Tyr) + L-tyrosine + ATP = L-tyrosyl-tRNA(Tyr) + AMP + diphosphate + H(+). Functionally, catalyzes the attachment of tyrosine to tRNA(Tyr) in a two-step reaction: tyrosine is first activated by ATP to form Tyr-AMP and then transferred to the acceptor end of tRNA(Tyr). The protein is Tyrosine--tRNA ligase of Legionella pneumophila (strain Paris).